A 381-amino-acid chain; its full sequence is Queuine tRNA-ribosyltransferase (381 aa).

The active-site Proton acceptor is the aspartate 96. Residues 96-100 (DSGGF), aspartate 150, glutamine 193, and glycine 220 contribute to the substrate site. Positions 251-257 (GVGAPDS) are RNA binding. Catalysis depends on aspartate 270, which acts as the Nucleophile. The RNA binding; important for wobble base 34 recognition stretch occupies residues 275–279 (TRIAR). Cysteine 308, cysteine 310, cysteine 313, and histidine 339 together coordinate Zn(2+).

Belongs to the queuine tRNA-ribosyltransferase family. As to quaternary structure, homodimer. Within each dimer, one monomer is responsible for RNA recognition and catalysis, while the other monomer binds to the replacement base PreQ1. The cofactor is Zn(2+).

The enzyme catalyses 7-aminomethyl-7-carbaguanine + guanosine(34) in tRNA = 7-aminomethyl-7-carbaguanosine(34) in tRNA + guanine. It functions in the pathway tRNA modification; tRNA-queuosine biosynthesis. Functionally, catalyzes the base-exchange of a guanine (G) residue with the queuine precursor 7-aminomethyl-7-deazaguanine (PreQ1) at position 34 (anticodon wobble position) in tRNAs with GU(N) anticodons (tRNA-Asp, -Asn, -His and -Tyr). Catalysis occurs through a double-displacement mechanism. The nucleophile active site attacks the C1' of nucleotide 34 to detach the guanine base from the RNA, forming a covalent enzyme-RNA intermediate. The proton acceptor active site deprotonates the incoming PreQ1, allowing a nucleophilic attack on the C1' of the ribose to form the product. After dissociation, two additional enzymatic reactions on the tRNA convert PreQ1 to queuine (Q), resulting in the hypermodified nucleoside queuosine (7-(((4,5-cis-dihydroxy-2-cyclopenten-1-yl)amino)methyl)-7-deazaguanosine). The polypeptide is Queuine tRNA-ribosyltransferase (Enterococcus faecalis (strain ATCC 700802 / V583)).